A 121-amino-acid chain; its full sequence is Small ribosomal subunit protein uS13 (121 aa).

The disordered stretch occupies residues 88–121; it reads GMRHRRGLPVRGQHTKNNARTRKGKAVAIANKKK.

This sequence belongs to the universal ribosomal protein uS13 family. As to quaternary structure, part of the 30S ribosomal subunit. Forms a loose heterodimer with protein S19. Forms two bridges to the 50S subunit in the 70S ribosome.

Functionally, located at the top of the head of the 30S subunit, it contacts several helices of the 16S rRNA. In the 70S ribosome it contacts the 23S rRNA (bridge B1a) and protein L5 of the 50S subunit (bridge B1b), connecting the 2 subunits; these bridges are implicated in subunit movement. Contacts the tRNAs in the A and P-sites. In Limosilactobacillus reuteri subsp. reuteri (strain JCM 1112) (Lactobacillus reuteri), this protein is Small ribosomal subunit protein uS13.